Reading from the N-terminus, the 86-residue chain is Small ribosomal subunit protein uS17 (86 aa).

It belongs to the universal ribosomal protein uS17 family. As to quaternary structure, part of the 30S ribosomal subunit.

Functionally, one of the primary rRNA binding proteins, it binds specifically to the 5'-end of 16S ribosomal RNA. This is Small ribosomal subunit protein uS17 from Dehalococcoides mccartyi (strain ATCC BAA-2266 / KCTC 15142 / 195) (Dehalococcoides ethenogenes (strain 195)).